The primary structure comprises 373 residues: Lipoyl amidotransferase LIPT1, mitochondrial (373 aa).

A mitochondrion-targeting transit peptide spans 1 to 25 (MLIPFSMKNCFQLLCNLKVPAAGFK). The BPL/LPL catalytic domain maps to 57–243 (LEGKPVLFLW…EYATSHQIDN (187 aa)). Residues tyrosine 107, arginine 151, lysine 161, threonine 179, threonine 208, and alanine 210 each contribute to the (R)-lipoyl-5'-AMP site.

It belongs to the LplA family.

The protein resides in the mitochondrion. The catalysed reaction is N(6)-[(R)-lipoyl]-L-lysyl-[glycine-cleavage complex H protein] + L-lysyl-[lipoyl-carrier protein] = L-lysyl-[glycine-cleavage complex H protein] + N(6)-[(R)-lipoyl]-L-lysyl-[lipoyl-carrier protein]. It catalyses the reaction (R)-lipoyl-5'-AMP + L-lysyl-[lipoyl-carrier protein] = N(6)-[(R)-lipoyl]-L-lysyl-[lipoyl-carrier protein] + AMP + 2 H(+). It functions in the pathway protein modification; protein lipoylation via exogenous pathway; protein N(6)-(lipoyl)lysine from lipoate: step 2/2. Its activity is regulated as follows. Inhibited by lipoyl-AMP analogs including hexanoyl-, octanoyl- and decanoyl-AMP. Its function is as follows. Lipoyl amidotransferase that catalyzes the transfer of lipoyl moieties from lipoyl-protein H of the glycine cleavage system (lipoyl-GCSH) to E2 subunits of the pyruvate dehydrogenase complex (PDCE2). Unable to catalyze the transfer of octanoyl from octanoyl-GCSH to PDCE2. In vitro, it is also able to catalyze the transfer of the lipoyl group from lipoyl-AMP to the specific lysine residue of lipoyl domains of lipoate-dependent enzymes but this reaction may not be physiologically relevant. The protein is Lipoyl amidotransferase LIPT1, mitochondrial (LIPT1) of Bos taurus (Bovine).